Here is a 154-residue protein sequence, read N- to C-terminus: Lymphocyte antigen 6K (154 aa).

An N-terminal signal peptide occupies residues 1–20 (MAFLVALLVVLGLQLVQSNA). The UPAR/Ly6 domain occupies 21 to 117 (LTCHVCEAQN…NGEGPPTDQL (97 aa)). Gly-123 is lipidated: GPI-anchor amidated glycine. The propeptide at 124–154 (KASGRRHRYIELLLTGFMVLTANGLSALCLL) is removed in mature form.

In terms of assembly, interacts with ADAM3 and TEX101. Strongly expressed in testes and weakly expressed in the epididymis, ovary, and uterus. Expressed in testicular germ cells (TGCs). Expressed in the testicular seminiferous tubules, in spermatocytes, spermatids, and testicular spermatozoa.

The protein localises to the secreted. Its subcellular location is the cytoplasm. It localises to the cell membrane. It is found in the cytoplasmic vesicle. The protein resides in the secretory vesicle. The protein localises to the acrosome. Its subcellular location is the membrane raft. In terms of biological role, required for sperm migration into the oviduct and male fertility by controlling binding of sperm to zona pellucida. May play a role in cell growth. This is Lymphocyte antigen 6K from Mus musculus (Mouse).